Here is a 95-residue protein sequence, read N- to C-terminus: Co-chaperonin GroES (95 aa).

It belongs to the GroES chaperonin family. In terms of assembly, heptamer of 7 subunits arranged in a ring. Interacts with the chaperonin GroEL.

Its subcellular location is the cytoplasm. Functionally, together with the chaperonin GroEL, plays an essential role in assisting protein folding. The GroEL-GroES system forms a nano-cage that allows encapsulation of the non-native substrate proteins and provides a physical environment optimized to promote and accelerate protein folding. GroES binds to the apical surface of the GroEL ring, thereby capping the opening of the GroEL channel. This Aliivibrio salmonicida (strain LFI1238) (Vibrio salmonicida (strain LFI1238)) protein is Co-chaperonin GroES.